Reading from the N-terminus, the 281-residue chain is Small ribosomal subunit protein uS2 (281 aa).

The disordered stretch occupies residues 229 to 281; it reads RSGANKTEGEAAEQPMAAWEKELLTNEAPAEASAEAAAPAAAEGETAEAPKAE. The segment covering 255 to 275 has biased composition (low complexity); that stretch reads EAPAEASAEAAAPAAAEGETA.

It belongs to the universal ribosomal protein uS2 family.

This chain is Small ribosomal subunit protein uS2, found in Bifidobacterium longum subsp. infantis (strain ATCC 15697 / DSM 20088 / JCM 1222 / NCTC 11817 / S12).